The chain runs to 273 residues: MERSVFYISDGTAITAEVLGHAVLSQFPVKATTFTLPFVESATRAQEVCEKINEIYRETGVRPLVFYSIISPEVRELIQHSEGFCQDIVQALVAPLQGELGVSPQPVLNRTHGLTESNLGKYDARIAAIDYALAHDDGISLRNLDQAQVILLGVSRCGKTPTSLYLAMQFGIRAANYPFIADDMDNLQLPAALKPFQHKLFGLTINPERLAAIREERRENSRYASLRQCRMEVGEVEALFRKNQIRYLNSTNYSVEEISTKILDILGMSRRMF.

Position 153 to 160 (153 to 160 (GVSRCGKT)) interacts with ADP.

This sequence belongs to the pyruvate, phosphate/water dikinase regulatory protein family. PSRP subfamily.

It catalyses the reaction [pyruvate, water dikinase] + ADP = [pyruvate, water dikinase]-phosphate + AMP + H(+). The enzyme catalyses [pyruvate, water dikinase]-phosphate + phosphate + H(+) = [pyruvate, water dikinase] + diphosphate. In terms of biological role, bifunctional serine/threonine kinase and phosphorylase involved in the regulation of the phosphoenolpyruvate synthase (PEPS) by catalyzing its phosphorylation/dephosphorylation. In Yersinia enterocolitica serotype O:8 / biotype 1B (strain NCTC 13174 / 8081), this protein is Putative phosphoenolpyruvate synthase regulatory protein.